A 417-amino-acid chain; its full sequence is MLEQMGIAAKAASWQLALLSSREKNQVLEKIADYLEAQTDDILRANAEDLAEARANGLSEAMLDRLALTPARLSGIANDVRQVCNLADPVGQVIDGGLLDSGLRIERRRVPLGVIGVIYEARPNVTVDVASLCLKTGNAAILRGGKETWRTNAATVKVIQQALQECGLPAAAVQAIESPDRALVGEMLKMDKYIDMLIPRGGAGLHKLCREQSTIPVITGGIGVCHIFVDETAEIAPALKIIVNAKTQRPSTCNTVETLLVHRNIADTFLPALSKQMAESGVTLHAAPSALPALQNGPAKVEPVKAEQYDDEYLSLDLNVKVVADMDEAIAHIREHGTQHSDAILTRTLRNANRFINEVDSSAVYVNASTRFTDGGQFGLGAEVAVSTQKLHARGPMGLEALTTYKWIGFGDDTIRA.

Belongs to the gamma-glutamyl phosphate reductase family.

It is found in the cytoplasm. It carries out the reaction L-glutamate 5-semialdehyde + phosphate + NADP(+) = L-glutamyl 5-phosphate + NADPH + H(+). It functions in the pathway amino-acid biosynthesis; L-proline biosynthesis; L-glutamate 5-semialdehyde from L-glutamate: step 2/2. Catalyzes the NADPH-dependent reduction of L-glutamate 5-phosphate into L-glutamate 5-semialdehyde and phosphate. The product spontaneously undergoes cyclization to form 1-pyrroline-5-carboxylate. The chain is Gamma-glutamyl phosphate reductase from Klebsiella pneumoniae (strain 342).